The sequence spans 116 residues: Large ribosomal subunit protein bL17 (116 aa).

The protein belongs to the bacterial ribosomal protein bL17 family. In terms of assembly, part of the 50S ribosomal subunit. Contacts protein L32.

In Synechococcus sp. (strain JA-2-3B'a(2-13)) (Cyanobacteria bacterium Yellowstone B-Prime), this protein is Large ribosomal subunit protein bL17.